A 103-amino-acid polypeptide reads, in one-letter code: ESAT-6-like protein EsxF (103 aa).

This sequence belongs to the WXG100 family. CFP-10 subfamily.

It localises to the secreted. In Mycobacterium tuberculosis (strain CDC 1551 / Oshkosh), this protein is ESAT-6-like protein EsxF.